The primary structure comprises 191 residues: dCTP deaminase, dUMP-forming (191 aa).

Residues Lys-101–Arg-106, Asp-119, Thr-127–Glu-129, Gln-148, Tyr-162, and Gln-174 each bind dCTP. The active-site Proton donor/acceptor is Glu-129. The interval Gly-163–Ile-191 is disordered. Over residues Tyr-171 to Ile-191 the composition is skewed to polar residues.

Belongs to the dCTP deaminase family. As to quaternary structure, homotrimer.

The catalysed reaction is dCTP + 2 H2O = dUMP + NH4(+) + diphosphate. Its pathway is pyrimidine metabolism; dUMP biosynthesis; dUMP from dCTP: step 1/1. Bifunctional enzyme that catalyzes both the deamination of dCTP to dUTP and the hydrolysis of dUTP to dUMP without releasing the toxic dUTP intermediate. This is dCTP deaminase, dUMP-forming from Acidothermus cellulolyticus (strain ATCC 43068 / DSM 8971 / 11B).